A 364-amino-acid polypeptide reads, in one-letter code: Peroxisome biogenesis protein 3-2 (364 aa).

The chain crosses the membrane as a helical span at residues 15–32; sequence VLVTAGCLGSGYLLYKLY. Positions 33-62 form a coiled coil; sequence NSHTRRLADLERELAHERENDEIIKTQMKA.

This sequence belongs to the peroxin-3 family.

The protein resides in the peroxisome membrane. Involved in morphology determination of peroxisomes, but not in import of peroxisomal matrix proteins. May act as a docking factor for PEX19 and be necessary for the import of peroxisomal membrane proteins in the peroxisomes. The chain is Peroxisome biogenesis protein 3-2 (PEX3-2) from Arabidopsis thaliana (Mouse-ear cress).